The primary structure comprises 105 residues: Anti-sigma factor RsrA (105 aa).

Zn(2+) contacts are provided by C11, H37, C41, and C44. A disulfide bond links C11 and C44. The interval 33–47 (KFEHHFEECSPCLEK) is contributes to redox-sensitivity. The interval 86–105 (QSVPEHDVAAAPSSSAPQES) is disordered. The segment covering 94–105 (AAAPSSSAPQES) has biased composition (low complexity).

This sequence belongs to the zinc-associated anti-sigma factor (ZAS) superfamily. As to quaternary structure, interacts with cognate sigma factor SigR under reducing but not oxiding conditions. Treatment with the thiol-oxidzing agent diamide inhibits the interaction, while incubation with thioredoxin (trxA) stimulates the interaction. Zn(2+) serves as cofactor. Under oxidizing conditions up to 3 disulfide bonds are formed. A single disulfide bond inhibits binding to SigR. Cys-11 forms a disulfide bond with either Cys-44 (the major bind) or Cys-41 (a minor bond).

Its function is as follows. A redox-regulated anti-sigma factor for extracytoplasmic function (ECF) sigma factor SigR, and a key sensor of disulfide stress. Holds SigR, its cognate ECF sigma factor, in an inactive form, inhibiting its sigma activity under reducing but not oxidizing conditions; oxidation and reduction of the anti-sigma factor is reversible. Mycothiol (MSH) is competent for reduction of RsrA, allowing it to bind to SigR. In conjunction with its cognate sigma factor SigR may sense the intracellular level of reduced MSH. Probably releases SigR during oxidative stress. In Streptomyces coelicolor (strain ATCC BAA-471 / A3(2) / M145), this protein is Anti-sigma factor RsrA (rsrA).